The sequence spans 169 residues: Lutropin/choriogonadotropin subunit beta (169 aa).

Residues 1-20 (MEMLQGLLLWMLLSVGGVWA) form the signal peptide. 6 disulfides stabilise this stretch: Cys-29–Cys-77, Cys-43–Cys-92, Cys-46–Cys-130, Cys-54–Cys-108, Cys-58–Cys-110, and Cys-113–Cys-120. N-linked (GlcNAc...) asparagine glycosylation occurs at Asn-33. The interval 131–169 (APQASSSSKDPPSQPLTSTSTPTPGASNRSSHPLPIKTS) is disordered. Residues 145 to 154 (PLTSTSTPTP) show a composition bias toward low complexity. The segment covering 155–169 (GASNRSSHPLPIKTS) has biased composition (polar residues). A glycan (N-linked (GlcNAc...) asparagine) is linked at Asn-158.

This sequence belongs to the glycoprotein hormones subunit beta family. Heterodimer of a common alpha chain and a unique beta chain which confers biological specificity to thyrotropin, lutropin, follitropin and gonadotropin.

Its subcellular location is the secreted. Its function is as follows. Promotes spermatogenesis and ovulation by stimulating the testes and ovaries to synthesize steroids. The protein is Lutropin/choriogonadotropin subunit beta (LHB) of Equus quagga burchellii (Burchell's zebra).